A 322-amino-acid chain; its full sequence is Ribonuclease Z (322 aa).

Residues His-60, His-62, Asp-64, His-65, His-140, Asp-210, and His-270 each coordinate Zn(2+). Asp-64 serves as the catalytic Proton acceptor.

The protein belongs to the RNase Z family. In terms of assembly, homodimer. Requires Zn(2+) as cofactor.

The enzyme catalyses Endonucleolytic cleavage of RNA, removing extra 3' nucleotides from tRNA precursor, generating 3' termini of tRNAs. A 3'-hydroxy group is left at the tRNA terminus and a 5'-phosphoryl group is left at the trailer molecule.. Zinc phosphodiesterase, which displays some tRNA 3'-processing endonuclease activity. Probably involved in tRNA maturation, by removing a 3'-trailer from precursor tRNA. In Methanococcus aeolicus (strain ATCC BAA-1280 / DSM 17508 / OCM 812 / Nankai-3), this protein is Ribonuclease Z.